A 311-amino-acid polypeptide reads, in one-letter code: tRNA-cytidine(32) 2-sulfurtransferase (311 aa).

The PP-loop motif motif lies at 47–52 (SGGKDS). C122, C125, and C213 together coordinate [4Fe-4S] cluster.

Belongs to the TtcA family. Homodimer. It depends on Mg(2+) as a cofactor. [4Fe-4S] cluster serves as cofactor.

It localises to the cytoplasm. The catalysed reaction is cytidine(32) in tRNA + S-sulfanyl-L-cysteinyl-[cysteine desulfurase] + AH2 + ATP = 2-thiocytidine(32) in tRNA + L-cysteinyl-[cysteine desulfurase] + A + AMP + diphosphate + H(+). It functions in the pathway tRNA modification. In terms of biological role, catalyzes the ATP-dependent 2-thiolation of cytidine in position 32 of tRNA, to form 2-thiocytidine (s(2)C32). The sulfur atoms are provided by the cysteine/cysteine desulfurase (IscS) system. This chain is tRNA-cytidine(32) 2-sulfurtransferase, found in Salmonella paratyphi A (strain ATCC 9150 / SARB42).